The following is a 425-amino-acid chain: cAMP/cGMP-dependent 3',5'-cAMP/cGMP phosphodiesterase 7 (425 aa).

The first 17 residues, 1–17 (MKYLILILIFFIEINNG), serve as a signal peptide directing secretion.

Belongs to the cyclic nucleotide phosphodiesterase class-II family.

It is found in the secreted. It localises to the extracellular space. Its subcellular location is the cell surface. The enzyme catalyses 3',5'-cyclic AMP + H2O = AMP + H(+). It carries out the reaction 3',5'-cyclic GMP + H2O = GMP + H(+). Inhibited by dithiotreitol (DTT). Its function is as follows. Phosphodiesterase with dual cAMP/cGMP specificity. However, displays a preference for cAMP over cGMP. Seems to regulate cAMP/cGMP concentration especially during cell aggregation. In Dictyostelium discoideum (Social amoeba), this protein is cAMP/cGMP-dependent 3',5'-cAMP/cGMP phosphodiesterase 7 (pde7).